We begin with the raw amino-acid sequence, 219 residues long: Probable N-acetyltransferase camello (219 aa).

2 consecutive transmembrane segments (helical) span residues 42 to 62 (FYFI…SYVL) and 64 to 84 (LTSL…EFHG). One can recognise an N-acetyltransferase domain in the interval 62–218 (LSLTSLVALL…TVIYYRYDIK (157 aa)).

Belongs to the camello family. As to expression, at the beginning of gastrulation, expressed in deep cells of the presumptive mesoderm. At later gastrulation stages, expressed at the interface between already involuted and preinvoluted mesoderm. At late neurula and tailbud stages, expressed in the deep mass of cells lying ventrally and laterally to the closed blastopore.

The protein localises to the golgi apparatus membrane. In terms of biological role, plays a role in regulation of gastrulation, possibly by controlled reduction of cell adhesion which is necessary for optimal cell motility. This Xenopus laevis (African clawed frog) protein is Probable N-acetyltransferase camello.